Here is a 259-residue protein sequence, read N- to C-terminus: Hydroxyacylglutathione hydrolase (259 aa).

Zn(2+) contacts are provided by histidine 56, histidine 58, aspartate 60, histidine 61, histidine 112, aspartate 133, and histidine 171.

It belongs to the metallo-beta-lactamase superfamily. Glyoxalase II family. In terms of assembly, monomer. Zn(2+) is required as a cofactor.

It carries out the reaction an S-(2-hydroxyacyl)glutathione + H2O = a 2-hydroxy carboxylate + glutathione + H(+). Its pathway is secondary metabolite metabolism; methylglyoxal degradation; (R)-lactate from methylglyoxal: step 2/2. Thiolesterase that catalyzes the hydrolysis of S-D-lactoyl-glutathione to form glutathione and D-lactic acid. The protein is Hydroxyacylglutathione hydrolase of Pseudomonas putida (strain ATCC 700007 / DSM 6899 / JCM 31910 / BCRC 17059 / LMG 24140 / F1).